The following is a 412-amino-acid chain: Glutamyl-tRNA reductase (412 aa).

Residues 52–55, Ser-108, 113–115, and Gln-119 contribute to the substrate site; these read TCNR and EYE. Cys-53 functions as the Nucleophile in the catalytic mechanism. 189–194 is an NADP(+) binding site; it reads GAGEIG.

This sequence belongs to the glutamyl-tRNA reductase family. In terms of assembly, homodimer.

It carries out the reaction (S)-4-amino-5-oxopentanoate + tRNA(Glu) + NADP(+) = L-glutamyl-tRNA(Glu) + NADPH + H(+). The protein operates within porphyrin-containing compound metabolism; protoporphyrin-IX biosynthesis; 5-aminolevulinate from L-glutamyl-tRNA(Glu): step 1/2. Its function is as follows. Catalyzes the NADPH-dependent reduction of glutamyl-tRNA(Glu) to glutamate 1-semialdehyde (GSA). The sequence is that of Glutamyl-tRNA reductase from Sulfurisphaera tokodaii (strain DSM 16993 / JCM 10545 / NBRC 100140 / 7) (Sulfolobus tokodaii).